The following is a 125-amino-acid chain: MYHLMLVCLGGAIGAGMRHLTVTAAGRALGTAFPWGTLAVNVAGSFAMGLLVEALARKFSVSNEIRLLLAPGMLGGFTTFSAFSLDVAVLWERGAQSAALAYVLASVAGSILALFVGLWLARSIL.

Transmembrane regions (helical) follow at residues 4–24, 32–52, 67–87, and 100–120; these read LMLV…TVTA, AFPW…GLLV, LLLA…SLDV, and LAYV…GLWL. Na(+) is bound by residues G75 and T78.

The protein belongs to the fluoride channel Fluc/FEX (TC 1.A.43) family.

It localises to the cell inner membrane. It carries out the reaction fluoride(in) = fluoride(out). Its activity is regulated as follows. Na(+) is not transported, but it plays an essential structural role and its presence is essential for fluoride channel function. Its function is as follows. Fluoride-specific ion channel. Important for reducing fluoride concentration in the cell, thus reducing its toxicity. This Chelativorans sp. (strain BNC1) protein is Fluoride-specific ion channel FluC.